The sequence spans 193 residues: Spermatogenesis-associated protein 3 (193 aa).

A compositionally biased stretch (basic residues) spans 1–16 (MKKVKKKKSDSRRRRN). The tract at residues 1 to 92 (MKKVKKKKSD…SPFLVPMEPK (92 aa)) is disordered. Residues 17–35 (SISPQTSSDSSQQPSSETP) are compositionally biased toward low complexity. Residues 36 to 48 (PSCPEPASPPSKP) show a composition bias toward pro residues.

In terms of tissue distribution, strongly expressed in testis. Faintly expressed in epididymis, ovary, spleen, kidney, lung, heart, brain, epididymis, liver and skeletal muscle.

The protein localises to the cell projection. It localises to the cilium. It is found in the flagellum. The polypeptide is Spermatogenesis-associated protein 3 (Spata3) (Mus musculus (Mouse)).